The following is a 1315-amino-acid chain: Probable nucleoporin C890.06 (1315 aa).

Belongs to the non-repetitive/WGA-negative nucleoporin family.

The protein localises to the cytoplasm. It is found in the nucleus. This Schizosaccharomyces pombe (strain 972 / ATCC 24843) (Fission yeast) protein is Probable nucleoporin C890.06.